Here is a 156-residue protein sequence, read N- to C-terminus: 6,7-dimethyl-8-ribityllumazine synthase (156 aa).

Residues Phe-23, 57–59 (AYE), and 81–83 (AII) each bind 5-amino-6-(D-ribitylamino)uracil. (2S)-2-hydroxy-3-oxobutyl phosphate is bound at residue 86-87 (ST). The active-site Proton donor is the His-89. Phe-114 is a 5-amino-6-(D-ribitylamino)uracil binding site. Arg-128 is a binding site for (2S)-2-hydroxy-3-oxobutyl phosphate.

The protein belongs to the DMRL synthase family.

The catalysed reaction is (2S)-2-hydroxy-3-oxobutyl phosphate + 5-amino-6-(D-ribitylamino)uracil = 6,7-dimethyl-8-(1-D-ribityl)lumazine + phosphate + 2 H2O + H(+). The protein operates within cofactor biosynthesis; riboflavin biosynthesis; riboflavin from 2-hydroxy-3-oxobutyl phosphate and 5-amino-6-(D-ribitylamino)uracil: step 1/2. In terms of biological role, catalyzes the formation of 6,7-dimethyl-8-ribityllumazine by condensation of 5-amino-6-(D-ribitylamino)uracil with 3,4-dihydroxy-2-butanone 4-phosphate. This is the penultimate step in the biosynthesis of riboflavin. The chain is 6,7-dimethyl-8-ribityllumazine synthase from Campylobacter hominis (strain ATCC BAA-381 / DSM 21671 / CCUG 45161 / LMG 19568 / NCTC 13146 / CH001A).